Reading from the N-terminus, the 404-residue chain is Agnestins biosynthesis cluster transcription factor AgnL10 (404 aa).

The segment at residues 23-50 (CNRCAVSKIKCSKEKPACARCAKQDKVC) is a DNA-binding region (zn(2)-C6 fungal-type). Disordered stretches follow at residues 54–83 (ATKR…PTAA), 188–209 (ASAS…PSSG), and 294–318 (PGPD…AGVD). Residues 57–68 (RAGRKRGSRRHN) are compositionally biased toward basic residues. A compositionally biased stretch (polar residues) spans 74–83 (PTTQDLPTAA). Residues 188 to 197 (ASASSMDPAA) are compositionally biased toward low complexity.

The protein resides in the nucleus. Transcription factor that regulates the expression of the gene cluster that mediates the biosynthesis of agnestins, dihydroxy-xanthone metabolites. The polypeptide is Agnestins biosynthesis cluster transcription factor AgnL10 (Paecilomyces divaricatus (Penicillium divaricatum)).